A 76-amino-acid polypeptide reads, in one-letter code: Small ribosomal subunit protein uS17 (76 aa).

The protein belongs to the universal ribosomal protein uS17 family. Part of the 30S ribosomal subunit.

In terms of biological role, one of the primary rRNA binding proteins, it binds specifically to the 5'-end of 16S ribosomal RNA. The chain is Small ribosomal subunit protein uS17 from Dinoroseobacter shibae (strain DSM 16493 / NCIMB 14021 / DFL 12).